A 597-amino-acid polypeptide reads, in one-letter code: Pentatricopeptide repeat-containing protein At2g21090 (597 aa).

PPR repeat units lie at residues 45–79, 81–111, 112–142, 143–177, 178–212, 213–243, 244–274, 275–309, 310–344, 345–375, 377–411, 412–447, and 448–478; these read PFDLLASLLQQCGDTKSLKQGKWIHRHLKITGFKR, NTLLSNHLIGMYMKCGKPIDACKVFDQMHLR, NLYSWNNMVSGYVKSGMLVRARVVFDSMPER, DVVSWNTMVIGYAQDGNLHEALWFYKEFRRSGIKF, NEFSFAGLLTACVKSRQLQLNRQAHGQVLVAGFLS, NVVLSCSIIDAYAKCGQMESAKRCFDEMTVK, DIHIWTTLISGYAKLGDMEAAEKLFCEMPEK, NPVSWTALIAGYVRQGSGNRALDLFRKMIALGVKP, EQFTFSSCLCASASIASLRHGKEIHGYMIRTNVRP, NAIVISSLIDMYSKSGSLEASERVFRICDDK, DCVFWNTMISALAQHGLGHKALRMLDDMIKFRVQP, NRTTLVVILNACSHSGLVEEGLRWFESMTVQHGIVP, and DQEHYACLIDLLGRAGCFKELMRKIEEMPFE. The type E motif stretch occupies residues 483 to 558; sequence IWNAILGVCR…EKAVSWIEIE (76 aa). The segment at 559–591 is type E(+) motif; sequence KKVEAFTVSDGSHAHARKEEIYFILHNLAAVIE.

It belongs to the PPR family. PCMP-E subfamily.

The sequence is that of Pentatricopeptide repeat-containing protein At2g21090 (PCMP-E48) from Arabidopsis thaliana (Mouse-ear cress).